The sequence spans 530 residues: Chitin synthase 1 (530 aa).

Residue asparagine 17 is glycosylated (N-linked (GlcNAc...) asparagine). The tract at residues 22–94 (QESSSNLIQQ…QANNNRKVTR (73 aa)) is disordered. Positions 24–56 (SSSNLIQQQQPGTNYARNQQTLSSLRSQKQQAE) are enriched in polar residues. Asparagine 118, asparagine 310, and asparagine 474 each carry an N-linked (GlcNAc...) asparagine glycan. Helical transmembrane passes span 477 to 497 (FFAGVYGLIHFSKIWNSGHGF) and 508 to 528 (IYNVISLIFSWFSVVIVLSFL).

The protein belongs to the chitin synthase family. Class II subfamily.

The protein resides in the cell membrane. The catalysed reaction is [(1-&gt;4)-N-acetyl-beta-D-glucosaminyl](n) + UDP-N-acetyl-alpha-D-glucosamine = [(1-&gt;4)-N-acetyl-beta-D-glucosaminyl](n+1) + UDP + H(+). Its function is as follows. Polymerizes chitin, a structural polymer of the cell wall and septum, by transferring the sugar moiety of UDP-GlcNAc to the non-reducing end of the growing chitin polymer. This chain is Chitin synthase 1, found in Rhizopus delemar (strain RA 99-880 / ATCC MYA-4621 / FGSC 9543 / NRRL 43880) (Mucormycosis agent).